The following is a 318-amino-acid chain: MRIKATVERLPGGMMLVPLLLGALCHTLWPQAGSTLGSFSNGLISGTVPILAVWFFCMGATIQLRASGRVLRRSGSLVLTKIAVAWLVAVVCAPLLPIGGIPSGPLTGLSVLALVAAMDMTNGGLYAALMQQYGSSEDAGAVVLMSLESGPLISMLILGASGLATFEPQLFVGAVLPLLLGFALGNLDAQLRQFFAQATQTLVPFFGFALGNTLDLSTIVHTGASGVLLGVAVIVITGLPLLLADRWLGGGDGTAGVAASSTAGAAVATPALIAGMAPQFAPAAPAATALVASAVIVTSVLVPLLTALQAGRSRQRIG.

Transmembrane regions (helical) follow at residues 10–30 (LPGG…TLWP), 42–62 (GLIS…GATI), 82–102 (IAVA…GGIP), 109–129 (LSVL…YAAL), 139–159 (AGAV…LILG), 163–183 (LATF…LGFA), 201–221 (TLVP…TIVH), 224–244 (ASGV…LLLA), 257–277 (VAAS…AGMA), and 288–308 (TALV…LTAL).

The protein belongs to the KdgT transporter family.

It localises to the cell inner membrane. It carries out the reaction 2-dehydro-3-deoxy-D-gluconate(in) + H(+)(in) = 2-dehydro-3-deoxy-D-gluconate(out) + H(+)(out). Its function is as follows. Catalyzes the proton-dependent uptake of 2-keto-3-deoxygluconate (KDG) into the cell. The chain is 2-keto-3-deoxygluconate permease from Xanthomonas oryzae pv. oryzae (strain MAFF 311018).